The chain runs to 138 residues: Large ribosomal subunit protein uL16 (138 aa).

Over residues 1–19 the composition is skewed to basic residues; that stretch reads MLIPKRVKYRRQHRPHRSG. A disordered region spans residues 1-24; the sequence is MLIPKRVKYRRQHRPHRSGVSKGG.

The protein belongs to the universal ribosomal protein uL16 family. In terms of assembly, part of the 50S ribosomal subunit.

Functionally, binds 23S rRNA and is also seen to make contacts with the A and possibly P site tRNAs. In Corynebacterium diphtheriae (strain ATCC 700971 / NCTC 13129 / Biotype gravis), this protein is Large ribosomal subunit protein uL16.